Consider the following 171-residue polypeptide: Crossover junction endodeoxyribonuclease RuvC (171 aa).

Residues aspartate 7, glutamate 67, and aspartate 139 contribute to the active site. Mg(2+) is bound by residues aspartate 7, glutamate 67, and aspartate 139.

This sequence belongs to the RuvC family. In terms of assembly, homodimer which binds Holliday junction (HJ) DNA. The HJ becomes 2-fold symmetrical on binding to RuvC with unstacked arms; it has a different conformation from HJ DNA in complex with RuvA. In the full resolvosome a probable DNA-RuvA(4)-RuvB(12)-RuvC(2) complex forms which resolves the HJ. Mg(2+) serves as cofactor.

It is found in the cytoplasm. It catalyses the reaction Endonucleolytic cleavage at a junction such as a reciprocal single-stranded crossover between two homologous DNA duplexes (Holliday junction).. In terms of biological role, the RuvA-RuvB-RuvC complex processes Holliday junction (HJ) DNA during genetic recombination and DNA repair. Endonuclease that resolves HJ intermediates. Cleaves cruciform DNA by making single-stranded nicks across the HJ at symmetrical positions within the homologous arms, yielding a 5'-phosphate and a 3'-hydroxyl group; requires a central core of homology in the junction. The consensus cleavage sequence is 5'-(A/T)TT(C/G)-3'. Cleavage occurs on the 3'-side of the TT dinucleotide at the point of strand exchange. HJ branch migration catalyzed by RuvA-RuvB allows RuvC to scan DNA until it finds its consensus sequence, where it cleaves and resolves the cruciform DNA. This Geotalea uraniireducens (strain Rf4) (Geobacter uraniireducens) protein is Crossover junction endodeoxyribonuclease RuvC.